Reading from the N-terminus, the 210-residue chain is 7-carboxy-7-deazaguanine synthase (210 aa).

Substrate-binding positions include 25-27 (IQG) and R40. Residues 31-210 (HTGTAAYFIR…LQTHKYLNIP (180 aa)) form the Radical SAM core domain. [4Fe-4S] cluster contacts are provided by C44, C48, and C51. T84 provides a ligand contact to substrate. S-adenosyl-L-methionine contacts are provided by residues G86 and 127–129 (SPK). P210 serves as a coordination point for substrate.

The protein belongs to the radical SAM superfamily. 7-carboxy-7-deazaguanine synthase family. Homodimer. It depends on [4Fe-4S] cluster as a cofactor. S-adenosyl-L-methionine serves as cofactor. Mg(2+) is required as a cofactor.

The catalysed reaction is 6-carboxy-5,6,7,8-tetrahydropterin + H(+) = 7-carboxy-7-deazaguanine + NH4(+). It participates in purine metabolism; 7-cyano-7-deazaguanine biosynthesis. In terms of biological role, catalyzes the complex heterocyclic radical-mediated conversion of 6-carboxy-5,6,7,8-tetrahydropterin (CPH4) to 7-carboxy-7-deazaguanine (CDG), a step common to the biosynthetic pathways of all 7-deazapurine-containing compounds. The sequence is that of 7-carboxy-7-deazaguanine synthase from Flavobacterium psychrophilum (strain ATCC 49511 / DSM 21280 / CIP 103535 / JIP02/86).